Reading from the N-terminus, the 203-residue chain is Recombination protein RecR (203 aa).

The C4-type zinc-finger motif lies at 56 to 71 (CAVCGNVSDEERCRIC). In terms of domain architecture, Toprim spans 79–179 (SLICVVEEPK…TVTRIASGLP (101 aa)).

This sequence belongs to the RecR family.

May play a role in DNA repair. It seems to be involved in an RecBC-independent recombinational process of DNA repair. It may act with RecF and RecO. The protein is Recombination protein RecR of Mycolicibacterium vanbaalenii (strain DSM 7251 / JCM 13017 / BCRC 16820 / KCTC 9966 / NRRL B-24157 / PYR-1) (Mycobacterium vanbaalenii).